Here is a 307-residue protein sequence, read N- to C-terminus: Acetyl-coenzyme A carboxylase carboxyl transferase subunit beta (307 aa).

Residues 1–26 (MAMAEPQDPKKGDKKTAERRGGGWLS) are disordered. Positions 7–21 (QDPKKGDKKTAERRG) are enriched in basic and acidic residues. A CoA carboxyltransferase N-terminal domain is found at 45 to 307 (LWVKCPDTGE…LMMGRKRQAA (263 aa)).

This sequence belongs to the AccD/PCCB family. In terms of assembly, acetyl-CoA carboxylase is a heterohexamer composed of biotin carboxyl carrier protein (AccB), biotin carboxylase (AccC) and two subunits each of ACCase subunit alpha (AccA) and ACCase subunit beta (AccD).

It localises to the cytoplasm. It carries out the reaction N(6)-carboxybiotinyl-L-lysyl-[protein] + acetyl-CoA = N(6)-biotinyl-L-lysyl-[protein] + malonyl-CoA. It functions in the pathway lipid metabolism; malonyl-CoA biosynthesis; malonyl-CoA from acetyl-CoA: step 1/1. Its function is as follows. Component of the acetyl coenzyme A carboxylase (ACC) complex. Biotin carboxylase (BC) catalyzes the carboxylation of biotin on its carrier protein (BCCP) and then the CO(2) group is transferred by the transcarboxylase to acetyl-CoA to form malonyl-CoA. In Caulobacter vibrioides (strain ATCC 19089 / CIP 103742 / CB 15) (Caulobacter crescentus), this protein is Acetyl-coenzyme A carboxylase carboxyl transferase subunit beta.